The chain runs to 143 residues: uncharacterized protein (143 aa).

The next 2 helical transmembrane spans lie at 20 to 39 (FKYCSTSLFVLILFNSWITV) and 113 to 135 (YFSLQISLSFAFSGICVKYITGL).

Its subcellular location is the membrane. This is an uncharacterized protein from Saccharomyces cerevisiae (strain ATCC 204508 / S288c) (Baker's yeast).